The sequence spans 268 residues: Tryptophan synthase alpha chain (268 aa).

Active-site proton acceptor residues include glutamate 49 and aspartate 60.

Belongs to the TrpA family. As to quaternary structure, tetramer of two alpha and two beta chains.

The catalysed reaction is (1S,2R)-1-C-(indol-3-yl)glycerol 3-phosphate + L-serine = D-glyceraldehyde 3-phosphate + L-tryptophan + H2O. It functions in the pathway amino-acid biosynthesis; L-tryptophan biosynthesis; L-tryptophan from chorismate: step 5/5. The alpha subunit is responsible for the aldol cleavage of indoleglycerol phosphate to indole and glyceraldehyde 3-phosphate. This is Tryptophan synthase alpha chain from Yersinia pseudotuberculosis serotype O:1b (strain IP 31758).